The primary structure comprises 482 residues: tRNA sulfurtransferase (482 aa).

In terms of domain architecture, THUMP spans 61 to 165; that stretch reads NQVLTAVTHT…NEKLNLVIAR (105 aa). ATP-binding positions include 183–184, Lys265, Gly287, and Gln296; that span reads LI. An intrachain disulfide couples Cys344 to Cys456. One can recognise a Rhodanese domain in the interval 404-482; that stretch reads LGSDVVVLDI…GYKNVKVYRP (79 aa). Cys456 acts as the Cysteine persulfide intermediate in catalysis.

It belongs to the ThiI family.

Its subcellular location is the cytoplasm. It catalyses the reaction [ThiI sulfur-carrier protein]-S-sulfanyl-L-cysteine + a uridine in tRNA + 2 reduced [2Fe-2S]-[ferredoxin] + ATP + H(+) = [ThiI sulfur-carrier protein]-L-cysteine + a 4-thiouridine in tRNA + 2 oxidized [2Fe-2S]-[ferredoxin] + AMP + diphosphate. It carries out the reaction [ThiS sulfur-carrier protein]-C-terminal Gly-Gly-AMP + S-sulfanyl-L-cysteinyl-[cysteine desulfurase] + AH2 = [ThiS sulfur-carrier protein]-C-terminal-Gly-aminoethanethioate + L-cysteinyl-[cysteine desulfurase] + A + AMP + 2 H(+). It participates in cofactor biosynthesis; thiamine diphosphate biosynthesis. Its function is as follows. Catalyzes the ATP-dependent transfer of a sulfur to tRNA to produce 4-thiouridine in position 8 of tRNAs, which functions as a near-UV photosensor. Also catalyzes the transfer of sulfur to the sulfur carrier protein ThiS, forming ThiS-thiocarboxylate. This is a step in the synthesis of thiazole, in the thiamine biosynthesis pathway. The sulfur is donated as persulfide by IscS. The protein is tRNA sulfurtransferase of Aliivibrio salmonicida (strain LFI1238) (Vibrio salmonicida (strain LFI1238)).